Reading from the N-terminus, the 447-residue chain is ATP-dependent protease ATPase subunit HslU (447 aa).

ATP-binding positions include Ile17 and 59–64 (GVGKTE). The segment at 136–160 (PPARGGFQGEPTAEEKPTEKKESAT) is disordered. A compositionally biased stretch (basic and acidic residues) spans 148–159 (AEEKPTEKKESA). The ATP site is built by Asp260, Glu325, and Arg397.

The protein belongs to the ClpX chaperone family. HslU subfamily. As to quaternary structure, a double ring-shaped homohexamer of HslV is capped on each side by a ring-shaped HslU homohexamer. The assembly of the HslU/HslV complex is dependent on binding of ATP.

The protein resides in the cytoplasm. ATPase subunit of a proteasome-like degradation complex; this subunit has chaperone activity. The binding of ATP and its subsequent hydrolysis by HslU are essential for unfolding of protein substrates subsequently hydrolyzed by HslV. HslU recognizes the N-terminal part of its protein substrates and unfolds these before they are guided to HslV for hydrolysis. This is ATP-dependent protease ATPase subunit HslU from Coxiella burnetii (strain RSA 331 / Henzerling II).